The primary structure comprises 248 residues: UDP-N-acetyl-D-mannosaminuronic acid transferase (248 aa).

This sequence belongs to the glycosyltransferase 26 family.

It catalyses the reaction UDP-N-acetyl-alpha-D-mannosaminouronate + N-acetyl-alpha-D-glucosaminyl-di-trans,octa-cis-undecaprenyl diphosphate = beta-D-ManNAcA-(1-&gt;4)-alpha-D-GlcNAc-di-trans,octa-cis-undecaprenyl diphosphate + UDP + H(+). It functions in the pathway bacterial outer membrane biogenesis; enterobacterial common antigen biosynthesis. Functionally, catalyzes the synthesis of Und-PP-GlcNAc-ManNAcA (Lipid II), the second lipid-linked intermediate involved in enterobacterial common antigen (ECA) synthesis. This Klebsiella pneumoniae subsp. pneumoniae (strain ATCC 700721 / MGH 78578) protein is UDP-N-acetyl-D-mannosaminuronic acid transferase.